Consider the following 380-residue polypeptide: Cytochrome b (380 aa).

4 helical membrane passes run 33-53, 77-98, 113-133, and 178-198; these read FGSLLGACLIIQITTGLFLAM, WMIRHLHANGASMFFICLFLHI, WNIGIILLFTTMMTAFMGYVL, and FFTLHFMLPFIITALTTLHLL. Heme b contacts are provided by H83 and H97. The heme b site is built by H182 and H196. H201 is an a ubiquinone binding site. Transmembrane regions (helical) follow at residues 226-246, 288-308, 320-340, and 347-367; these read IKDILGLLLFLLALMTLTLLS, LGGVMALMLSILILTTIPALH, LSQFLYWLLIADLLILTWIGG, and FITISQVASTLYFTTILLLMP.

The protein belongs to the cytochrome b family. As to quaternary structure, the cytochrome bc1 complex contains 11 subunits: 3 respiratory subunits (MT-CYB, CYC1 and UQCRFS1), 2 core proteins (UQCRC1 and UQCRC2) and 6 low-molecular weight proteins (UQCRH/QCR6, UQCRB/QCR7, UQCRQ/QCR8, UQCR10/QCR9, UQCR11/QCR10 and a cleavage product of UQCRFS1). This cytochrome bc1 complex then forms a dimer. The cofactor is heme b.

Its subcellular location is the mitochondrion inner membrane. In terms of biological role, component of the ubiquinol-cytochrome c reductase complex (complex III or cytochrome b-c1 complex) that is part of the mitochondrial respiratory chain. The b-c1 complex mediates electron transfer from ubiquinol to cytochrome c. Contributes to the generation of a proton gradient across the mitochondrial membrane that is then used for ATP synthesis. This chain is Cytochrome b (MT-CYB), found in Pongo abelii (Sumatran orangutan).